The primary structure comprises 911 residues: Protein transport protein SEC24-1 (911 aa).

Low complexity predominate over residues 108–123 (QPLPQQQQQQQQQQGP). Residues 108–130 (QPLPQQQQQQQQQQGPAKPPKPM) form a disordered region. Positions 226, 229, 248, and 251 each coordinate Zn(2+). The interval 226-251 (CRRCRSYMNPFVHFNQDGRRWKCNIC) is zinc finger-like.

Belongs to the SEC23/SEC24 family. SEC24 subfamily. The COPII coat is composed of at least 5 proteins: the SEC23/24 complex, the SEC13/31 complex, and the protein SAR1. Golgi apparatus membrane; Peripheral membrane protein; Cytoplasmic side.

It localises to the cytoplasm. The protein localises to the cytoplasmic vesicle. The protein resides in the COPII-coated vesicle membrane. It is found in the endoplasmic reticulum membrane. Its subcellular location is the golgi apparatus membrane. Component of the coat protein complex II (COPII) which promotes the formation of transport vesicles from the endoplasmic reticulum (ER). The coat has two main functions, the physical deformation of the endoplasmic reticulum membrane into vesicles and the selection of cargo molecules. This is Protein transport protein SEC24-1 (SEC241) from Naumovozyma castellii (Yeast).